The sequence spans 473 residues: Bifunctional protein HldE (473 aa).

Residues 1-318 (MKLSMPRFDQ…RAVQREEGSE (318 aa)) form a ribokinase region. 194–197 (NLGE) is an ATP binding site. Asp-263 is a catalytic residue. The cytidylyltransferase stretch occupies residues 343 to 473 (FTNGCFDILH…TAIVEKIRKA (131 aa)).

It in the N-terminal section; belongs to the carbohydrate kinase PfkB family. The protein in the C-terminal section; belongs to the cytidylyltransferase family. In terms of assembly, homodimer.

The enzyme catalyses D-glycero-beta-D-manno-heptose 7-phosphate + ATP = D-glycero-beta-D-manno-heptose 1,7-bisphosphate + ADP + H(+). It carries out the reaction D-glycero-beta-D-manno-heptose 1-phosphate + ATP + H(+) = ADP-D-glycero-beta-D-manno-heptose + diphosphate. It functions in the pathway nucleotide-sugar biosynthesis; ADP-L-glycero-beta-D-manno-heptose biosynthesis; ADP-L-glycero-beta-D-manno-heptose from D-glycero-beta-D-manno-heptose 7-phosphate: step 1/4. Its pathway is nucleotide-sugar biosynthesis; ADP-L-glycero-beta-D-manno-heptose biosynthesis; ADP-L-glycero-beta-D-manno-heptose from D-glycero-beta-D-manno-heptose 7-phosphate: step 3/4. In terms of biological role, catalyzes the phosphorylation of D-glycero-D-manno-heptose 7-phosphate at the C-1 position to selectively form D-glycero-beta-D-manno-heptose-1,7-bisphosphate. Functionally, catalyzes the ADP transfer from ATP to D-glycero-beta-D-manno-heptose 1-phosphate, yielding ADP-D-glycero-beta-D-manno-heptose. This Stutzerimonas stutzeri (strain A1501) (Pseudomonas stutzeri) protein is Bifunctional protein HldE.